Reading from the N-terminus, the 590-residue chain is Putative DEAD-box ATP-dependent RNA helicase 51 (590 aa).

Positions 1-81 (MHPIKLCARS…KQGEGKKGSG (81 aa)) are disordered. The segment covering 40–51 (AACNSEGENNAT) has biased composition (polar residues). A compositionally biased stretch (basic and acidic residues) spans 59–78 (NKKMKEEKSKRKKKQGEGKK). A Q motif motif is present at residues 86–114 (KLFSDLPISDLTANAIRDMNYTHLTEIQA). The 177-residue stretch at 117–293 (IPPLMLGSDV…KLTFGSKEER (177 aa)) folds into the Helicase ATP-binding domain. Residue 130-137 (AKTGSGKT) coordinates ATP. The short motif at 240 to 243 (DEAD) is the DEAD box element. One can recognise a Helicase C-terminal domain in the interval 329-481 (VLYAFLKKAL…ELVPKLQPYL (153 aa)). The tract at residues 549 to 590 (LESSASKHRKKRNVNTGRRHGIGPSNPYGRKGSDDRRQFARF) is disordered. The segment covering 554 to 569 (SKHRKKRNVNTGRRHG) has biased composition (basic residues). The segment covering 579-590 (KGSDDRRQFARF) has biased composition (basic and acidic residues).

The protein belongs to the DEAD box helicase family. DDX18/HAS1 subfamily.

It catalyses the reaction ATP + H2O = ADP + phosphate + H(+). This is Putative DEAD-box ATP-dependent RNA helicase 51 from Oryza sativa subsp. japonica (Rice).